The chain runs to 478 residues: Amino acid oxidase imqH (478 aa).

Positions 1 to 22 (MPAPKSIIIVGSGVFGLSTAHA) are cleaved as a signal peptide. The FAD site is built by Val-14, Phe-15, Asp-38, Asn-53, Ala-57, Asn-58, Arg-63, and Ile-64. Asn-97 and Asn-167 each carry an N-linked (GlcNAc...) asparagine glycan. Val-208 is an FAD binding site. At Cys-399 the chain carries S-8alpha-FAD cysteine. FAD-binding residues include Phe-432 and Lys-433.

The protein belongs to the MSOX/MTOX family. Dimer. It depends on FAD as a cofactor.

Its pathway is secondary metabolite biosynthesis. Nonribosomal peptide synthetase; part of the gene cluster that mediates the biosynthesis of imizoquins A to D, tripeptide-derived alkaloids that serve a protective role against oxidative stress that are essential for normal germination. ImqB is a canonical three-module NRPS that assembles the tripeptide backbone of the imizoquins via condensation of Trp, Tyr, and Leu-derived precursors. N-methylation by imqF and phenol oxidation by imqC, followed by cyclization via the FAD-dependent oxidase imqH carry out the three-step transformation of L-tyrosine into tetrahydroisoquinoline. Importantly, this sequence requires the presence of a free amine in the tyrosine moiety, indicating that isoquinoline formation occurs prior to peptide bond formation. The imidazolidin-4-one ring of imizoquins could form following additional oxidation of the methyl-derived bridgehead carbon by imqH. Lastly, O-methylation by imqG and leucine hydroxylation by imqE complete biosynthesis of the imizoquins. In Aspergillus flavus (strain ATCC 200026 / FGSC A1120 / IAM 13836 / NRRL 3357 / JCM 12722 / SRRC 167), this protein is Amino acid oxidase imqH.